A 125-amino-acid chain; its full sequence is Multifunctional methyltransferase subunit TRM112-like protein (125 aa).

A TRM112 domain is found at 2 to 119 (KLLTHNLLSS…SRGIPNMLLN (118 aa)).

The protein belongs to the TRM112 family. Part of the heterodimeric BUD23-TRM112 methyltransferase complex; this heterodimerization is necessary for the metabolic stability and activity of the catalytic subunit BUD23. Part of the heterodimeric N6AMT1-TRM112 methyltransferase complex; this heterodimerization is necessary for S-adenosyl-L-methionine-binding to N6AMT1/HEMK2. Part of the heterodimeric ALKBH8-TRM112 methyltransferase complex. Part of the heterodimeric METTL5-TRM112 methyltransferase complex; this heterodimerization is necessary for the stability of the catalytic subunit METTL5. Part of the heterodimeric THUMPD3-TRM112 methyltransferase complex; this complex forms an active tRNA methyltransferase, where TRMT112 acts as an activator of the catalytic subunit THUMPD3. Part of the heterodimeric THUMPD2-TRM112 methyltransferase complex; this complex forms an active tRNA methyltransferase, where TRMT112 acts as an activator of the catalytic subunit THUMPD2. Part of the heterodimeric TRMT11-TRM112 methyltransferase complex; this complex forms an active tRNA methyltransferase, where TRMT112 acts as an activator of the catalytic subunit TRMT11. In terms of tissue distribution, abundantly expressed in the testis, also expressed in the brain, heart, kidney, liver, lung, muscle and spleen.

It is found in the nucleus. The protein localises to the nucleoplasm. It localises to the cytoplasm. Its subcellular location is the perinuclear region. In terms of biological role, acts as an activator of both rRNA/tRNA and protein methyltransferases. Together with methyltransferase BUD23, methylates the N(7) position of a guanine in 18S rRNA. The heterodimer with HEMK2/N6AMT1 catalyzes N5-methylation of ETF1 on 'Gln-185', using S-adenosyl L-methionine as methyl donor. The heterodimer with ALKBH8 catalyzes the methylation of 5-carboxymethyl uridine to 5-methylcarboxymethyl uridine at the wobble position of the anticodon loop in target tRNA species. Together with methyltransferase THUMPD3, catalyzes the formation of N(2)-methylguanosine at position 6 in a broad range of tRNA substrates and at position 7 of tRNA(Trp). Involved in the pre-rRNA processing steps leading to small-subunit rRNA production. Together with methyltransferase METTL5, specifically methylates the 6th position of adenine in position 1832 of 18S rRNA. In Mus musculus (Mouse), this protein is Multifunctional methyltransferase subunit TRM112-like protein (Trmt112).